The following is a 248-amino-acid chain: 3-deoxy-manno-octulosonate cytidylyltransferase (248 aa).

Belongs to the KdsB family.

It is found in the cytoplasm. It carries out the reaction 3-deoxy-alpha-D-manno-oct-2-ulosonate + CTP = CMP-3-deoxy-beta-D-manno-octulosonate + diphosphate. It functions in the pathway nucleotide-sugar biosynthesis; CMP-3-deoxy-D-manno-octulosonate biosynthesis; CMP-3-deoxy-D-manno-octulosonate from 3-deoxy-D-manno-octulosonate and CTP: step 1/1. The protein operates within bacterial outer membrane biogenesis; lipopolysaccharide biosynthesis. Functionally, activates KDO (a required 8-carbon sugar) for incorporation into bacterial lipopolysaccharide in Gram-negative bacteria. In Shigella dysenteriae serotype 1 (strain Sd197), this protein is 3-deoxy-manno-octulosonate cytidylyltransferase.